Consider the following 344-residue polypeptide: Phenylalanine--tRNA ligase alpha subunit (344 aa).

Residue Glu-256 participates in Mg(2+) binding.

Belongs to the class-II aminoacyl-tRNA synthetase family. Phe-tRNA synthetase alpha subunit type 1 subfamily. Tetramer of two alpha and two beta subunits. The cofactor is Mg(2+).

It is found in the cytoplasm. It catalyses the reaction tRNA(Phe) + L-phenylalanine + ATP = L-phenylalanyl-tRNA(Phe) + AMP + diphosphate + H(+). The polypeptide is Phenylalanine--tRNA ligase alpha subunit (Geobacillus thermodenitrificans (strain NG80-2)).